Here is a 222-residue protein sequence, read N- to C-terminus: Putative germin-like protein 3-2 (222 aa).

Residues 1 to 22 form the signal peptide; sequence MAKLILATFAVVFLALAATSLA. A disulfide bridge connects residues Cys-32 and Cys-50. N-linked (GlcNAc...) asparagine glycans are attached at residues Asn-55 and Asn-71. A Cupin type-1 domain is found at 64-212; it reads DGLTNAGNTT…AFQVDGGMVE (149 aa). Positions 112, 114, 119, and 158 each coordinate Mn(2+). Residue Asn-165 is glycosylated (N-linked (GlcNAc...) asparagine).

The protein belongs to the germin family. Oligomer (believed to be a pentamer but probably hexamer).

The protein localises to the secreted. It is found in the extracellular space. It localises to the apoplast. Its function is as follows. May play a role in plant defense. Probably has no oxalate oxidase activity even if the active site is conserved. This Oryza sativa subsp. japonica (Rice) protein is Putative germin-like protein 3-2.